A 130-amino-acid polypeptide reads, in one-letter code: Small ribosomal subunit protein uS9 (130 aa).

The tract at residues 109 to 130 (RMKERKKYGLKGARRAPQFSKR) is disordered. Residues 111–130 (KERKKYGLKGARRAPQFSKR) are compositionally biased toward basic residues.

Belongs to the universal ribosomal protein uS9 family.

In Alkaliphilus metalliredigens (strain QYMF), this protein is Small ribosomal subunit protein uS9.